A 160-amino-acid chain; its full sequence is Phosphopantetheine adenylyltransferase (160 aa).

Ser9 is a binding site for substrate. Residues 9 to 10 (SF) and His17 each bind ATP. Substrate-binding residues include Lys41, Ile73, and Lys87. ATP contacts are provided by residues 88-90 (GLR), Glu98, and 122-128 (YSFVSSS).

The protein belongs to the bacterial CoaD family. In terms of assembly, homohexamer. Requires Mg(2+) as cofactor.

It localises to the cytoplasm. It carries out the reaction (R)-4'-phosphopantetheine + ATP + H(+) = 3'-dephospho-CoA + diphosphate. It participates in cofactor biosynthesis; coenzyme A biosynthesis; CoA from (R)-pantothenate: step 4/5. Its function is as follows. Reversibly transfers an adenylyl group from ATP to 4'-phosphopantetheine, yielding dephospho-CoA (dPCoA) and pyrophosphate. This Mycolicibacterium gilvum (strain PYR-GCK) (Mycobacterium gilvum (strain PYR-GCK)) protein is Phosphopantetheine adenylyltransferase.